The primary structure comprises 174 residues: MPTNNHVQKEKFAEDRALLSQQNKEYAESLAKDIAKKEEKDKIRFEAEQKELRKKTIQDYREKLKGTVSQGPLRLLVRYPNGSRLILSFSPSQPMTSLFDAIILNPACPDYFSVRSVYPRAEIHCYPAWYHTIFNAEFKDETEKGANNVAKETNEVKCLETIPNNSILYVNLIQ.

Residues 8–58 (QKEKFAEDRALLSQQNKEYAESLAKDIAKKEEKDKIRFEAEQKELRKKTIQ) are a coiled coil. The UBX domain maps to 74-120 (RLLVRYPNGSRLILSFSPSQPMTSLFDAIILNPACPDYFSVRSVYPR).

In terms of assembly, forms a complex composed of deubiquitinating enzyme atx-3, adapter ubxn-5 and cdc-48.1. Interacts with atx-3 (via C-terminus). Interacts with cdc-48.1 (via N-terminus) and cdc-48.2. As to expression, specifically expressed in the germline.

In terms of biological role, probably acts as an adapter for ATPase cdc-48.1 and/or cdc-48.2, conferring substrate specificity. Unlike other UBX domain-containing protein does not bind 'Lys-48'-polyubiquitinated chain. The protein is UBX domain-containing protein 5 of Caenorhabditis elegans.